The chain runs to 263 residues: 3-methyl-2-oxobutanoate hydroxymethyltransferase (263 aa).

The Mg(2+) site is built by Asp-45 and Asp-84. 3-methyl-2-oxobutanoate contacts are provided by residues 45-46 (DS), Asp-84, and Lys-112. Glu-114 contributes to the Mg(2+) binding site. Glu-181 functions as the Proton acceptor in the catalytic mechanism.

Belongs to the PanB family. As to quaternary structure, homodecamer; pentamer of dimers. Mg(2+) is required as a cofactor.

The protein resides in the cytoplasm. It carries out the reaction 3-methyl-2-oxobutanoate + (6R)-5,10-methylene-5,6,7,8-tetrahydrofolate + H2O = 2-dehydropantoate + (6S)-5,6,7,8-tetrahydrofolate. Its pathway is cofactor biosynthesis; (R)-pantothenate biosynthesis; (R)-pantoate from 3-methyl-2-oxobutanoate: step 1/2. Catalyzes the reversible reaction in which hydroxymethyl group from 5,10-methylenetetrahydrofolate is transferred onto alpha-ketoisovalerate to form ketopantoate. This chain is 3-methyl-2-oxobutanoate hydroxymethyltransferase, found in Proteus mirabilis (strain HI4320).